A 138-amino-acid chain; its full sequence is Nucleoside diphosphate kinase (138 aa).

ATP is bound by residues Lys9, Phe57, Arg85, Thr91, Arg102, and Asn112. His115 (pros-phosphohistidine intermediate) is an active-site residue.

It belongs to the NDK family. Requires Mg(2+) as cofactor.

It is found in the cytoplasm. It carries out the reaction a 2'-deoxyribonucleoside 5'-diphosphate + ATP = a 2'-deoxyribonucleoside 5'-triphosphate + ADP. The catalysed reaction is a ribonucleoside 5'-diphosphate + ATP = a ribonucleoside 5'-triphosphate + ADP. Its function is as follows. Major role in the synthesis of nucleoside triphosphates other than ATP. The ATP gamma phosphate is transferred to the NDP beta phosphate via a ping-pong mechanism, using a phosphorylated active-site intermediate. This is Nucleoside diphosphate kinase from Picrophilus torridus (strain ATCC 700027 / DSM 9790 / JCM 10055 / NBRC 100828 / KAW 2/3).